Here is an 89-residue protein sequence, read N- to C-terminus: Small ribosomal subunit protein uS15 (89 aa).

The protein belongs to the universal ribosomal protein uS15 family. In terms of assembly, part of the 30S ribosomal subunit. Forms a bridge to the 50S subunit in the 70S ribosome, contacting the 23S rRNA.

Functionally, one of the primary rRNA binding proteins, it binds directly to 16S rRNA where it helps nucleate assembly of the platform of the 30S subunit by binding and bridging several RNA helices of the 16S rRNA. Forms an intersubunit bridge (bridge B4) with the 23S rRNA of the 50S subunit in the ribosome. The protein is Small ribosomal subunit protein uS15 of Prochlorococcus marinus (strain MIT 9515).